Consider the following 182-residue polypeptide: Large ribosomal subunit protein uL6 (182 aa).

It belongs to the universal ribosomal protein uL6 family. In terms of assembly, part of the 50S ribosomal subunit.

In terms of biological role, this protein binds to the 23S rRNA, and is important in its secondary structure. It is located near the subunit interface in the base of the L7/L12 stalk, and near the tRNA binding site of the peptidyltransferase center. This chain is Large ribosomal subunit protein uL6, found in Methanococcus maripaludis (strain C6 / ATCC BAA-1332).